The sequence spans 319 residues: Plastid lipid-associated protein 2, chloroplastic (319 aa).

The N-terminal 59 residues, 1 to 59, are a transit peptide targeting the chloroplast; the sequence is MATVQFFNQFPCKTRVQSSANSKPLSKPPSSLVPMSALTRRPSFPPGEFAVSRSDFRVR. The disordered stretch occupies residues 17–39; the sequence is QSSANSKPLSKPPSSLVPMSALT. Low complexity predominate over residues 18–36; it reads SSANSKPLSKPPSSLVPMS.

Belongs to the PAP/fibrillin family. In terms of tissue distribution, expressed almost exclusively in petals. Very weak expression in all other organs.

Its subcellular location is the plastid. The protein localises to the chloroplast. May stabilize the accumulated carotenoid structures. The polypeptide is Plastid lipid-associated protein 2, chloroplastic (PAP2) (Brassica campestris (Field mustard)).